A 396-amino-acid polypeptide reads, in one-letter code: L-lactate dehydrogenase (396 aa).

The FMN hydroxy acid dehydrogenase domain maps to 1 to 380 (MIISAASDYR…SGDSLVQELG (380 aa)). Residue Tyr24 coordinates substrate. FMN-binding residues include Ser106 and Gln127. Substrate is bound at residue Tyr129. Thr155 serves as a coordination point for FMN. Arg164 serves as a coordination point for substrate. An FMN-binding site is contributed by Lys251. His275 acts as the Proton acceptor in catalysis. Position 278 (Arg278) interacts with substrate. An FMN-binding site is contributed by 306–330 (DSGIRNGLDVVRMIALGADTVLLGR).

This sequence belongs to the FMN-dependent alpha-hydroxy acid dehydrogenase family. FMN is required as a cofactor.

Its subcellular location is the cell inner membrane. It catalyses the reaction (S)-lactate + A = pyruvate + AH2. Functionally, catalyzes the conversion of L-lactate to pyruvate. Is coupled to the respiratory chain. The polypeptide is L-lactate dehydrogenase (Salmonella newport (strain SL254)).